Reading from the N-terminus, the 173-residue chain is uncharacterized protein (173 aa).

Helical transmembrane passes span 9-29, 32-52, 100-120, and 127-147; these read FSIC…LLCV, ICSA…TFFH, MFLC…SFIV, and FLFL…GLYP.

It is found in the membrane. This is an uncharacterized protein from Saccharomyces cerevisiae (strain ATCC 204508 / S288c) (Baker's yeast).